The following is a 505-amino-acid chain: Cysteine--tRNA ligase (505 aa).

Cysteine 33 is a binding site for Zn(2+). The 'HIGH' region signature appears at 35–45 (PTVYDFAHIGN). Positions 229, 268, and 272 each coordinate Zn(2+). The 'KMSKS' region signature appears at 301-305 (KMSKS). Lysine 304 serves as a coordination point for ATP.

Belongs to the class-I aminoacyl-tRNA synthetase family. As to quaternary structure, monomer. It depends on Zn(2+) as a cofactor.

The protein localises to the cytoplasm. The enzyme catalyses tRNA(Cys) + L-cysteine + ATP = L-cysteinyl-tRNA(Cys) + AMP + diphosphate. The polypeptide is Cysteine--tRNA ligase (Brucella anthropi (strain ATCC 49188 / DSM 6882 / CCUG 24695 / JCM 21032 / LMG 3331 / NBRC 15819 / NCTC 12168 / Alc 37) (Ochrobactrum anthropi)).